The chain runs to 498 residues: Type II secretion system protein E (498 aa).

261–268 (GPTGSGKS) provides a ligand contact to ATP. Zn(2+) contacts are provided by Cys-394, Cys-397, Cys-425, and Cys-428.

The protein belongs to the GSP E family. Forms homooligomers; most probably hexamers. Interacts with OutL/GspL. Zn(2+) serves as cofactor.

The protein resides in the cell inner membrane. The enzyme catalyses ATP + H2O + cellular proteinSide 1 = ADP + phosphate + cellular proteinSide 2.. ATPase component of the type II secretion system required for the energy-dependent secretion of extracellular factors such as proteases and toxins from the periplasm. Acts as a molecular motor to provide the energy that is required for assembly of the pseudopilus and the extrusion of substrates generated in the cytoplasm. This Pectobacterium carotovorum subsp. carotovorum (Erwinia carotovora subsp. carotovora) protein is Type II secretion system protein E (outE).